Reading from the N-terminus, the 137-residue chain is Thioredoxin-like protein R548 (137 aa).

The Thioredoxin domain maps to 2 to 137; the sequence is SKDSVETNTI…LEKSIVESSQ (136 aa). Active-site nucleophile residues include cysteine 61 and cysteine 64. Cysteine 61 and cysteine 64 form a disulfide bridge.

This sequence belongs to the thioredoxin family.

Functionally, participates in various redox reactions through the reversible oxidation of its active center dithiol to a disulfide and catalyzes dithiol-disulfide exchange reactions. In Acanthamoeba polyphaga mimivirus (APMV), this protein is Thioredoxin-like protein R548.